The chain runs to 722 residues: Polyribonucleotide nucleotidyltransferase (722 aa).

Mg(2+)-binding residues include Asp495 and Asp501. The KH domain occupies 562 to 621 (PRLLSFRIDPELIGTVIGPGGRTIKGITERTNTKIDIEDGGIVTIASHDGAAAEEAQRII). The 69-residue stretch at 631 to 699 (GEIFPGSITR…NRGRINLTLR (69 aa)) folds into the S1 motif domain. The segment at 700 to 722 (GVSQNGGMSNYPEPTPTPVAPLT) is disordered. Residues 712–722 (EPTPTPVAPLT) show a composition bias toward pro residues.

Belongs to the polyribonucleotide nucleotidyltransferase family. It depends on Mg(2+) as a cofactor.

It is found in the cytoplasm. It catalyses the reaction RNA(n+1) + phosphate = RNA(n) + a ribonucleoside 5'-diphosphate. Involved in mRNA degradation. Catalyzes the phosphorolysis of single-stranded polyribonucleotides processively in the 3'- to 5'-direction. The sequence is that of Polyribonucleotide nucleotidyltransferase from Prochlorococcus marinus (strain NATL2A).